The chain runs to 1254 residues: Juxtamembrane domain-associated catenin (1254 aa).

Disordered stretches follow at residues 1–38 (MISS…TMRK), 84–106 (AGPT…DNPP), and 145–209 (PYSN…SAPG). Residues 12–22 (PIPEEGTEADG) show a composition bias toward acidic residues. Residues 145–157 (PYSNIDFDSSGLP) are compositionally biased toward polar residues. Fibronectin type-III domains follow at residues 207–302 (APGV…IPIS), 315–411 (APGR…IRPA), 428–518 (PPGQ…LRPT), and 530–624 (ILEA…IEPS). The segment at 412 to 433 (APQRHVPARKVSESVQPPGQPQ) is disordered. The segment at 662-685 (MVRESPPLPERDDSPPPLRRANNN) is disordered. 5 ARM repeats span residues 733–775 (GGIP…AVME), 777–820 (DGVR…ESAT), 874–922 (NLIE…YDPA), 969–1012 (HVVK…RAAV), and 1016–1058 (KGLP…KYAL). A disordered region spans residues 920–960 (DPAAAHSSSSKNMKHVASPKPEKKKKDKEKKKDKNPKNIVT). Residues 1159–1254 (GTARRGDSST…GGGNIDDSWV (96 aa)) form a disordered region. Residues 1166 to 1176 (SSTLARPISSQ) show a composition bias toward polar residues. A compositionally biased stretch (basic and acidic residues) spans 1177-1187 (GRERPSMHQLD).

It belongs to the beta-catenin family. In terms of assembly, associated with the catenin-cadherin complex consisting of hmr-1, hmp-1 and hmp-2. Interacts with hmr-1. Interacts with picc-1. Epidermal cells.

The protein resides in the cell junction. It is found in the adherens junction. The protein localises to the nucleus. Its function is as follows. May act as a positive modulator of hmr-1 function during epidermal morphogenesis. Required for proper localization of other junctional components, such as pac-1. In Caenorhabditis elegans, this protein is Juxtamembrane domain-associated catenin (jac-1).